Here is a 192-residue protein sequence, read N- to C-terminus: Pyridoxine/pyridoxamine 5'-phosphate oxidase (192 aa).

FMN is bound by residues 41–46, 56–57, arginine 62, lysine 63, and glutamine 85; these read RMMLLK and FT. Position 46 (lysine 46) interacts with substrate. Substrate-binding residues include tyrosine 103, arginine 107, and serine 111. Residues 120–121 and tryptophan 165 contribute to the FMN site; that span reads QS. 171-173 serves as a coordination point for substrate; the sequence is RLH. Arginine 175 contacts FMN.

The protein belongs to the pyridoxamine 5'-phosphate oxidase family. Homodimer. FMN serves as cofactor.

The catalysed reaction is pyridoxamine 5'-phosphate + O2 + H2O = pyridoxal 5'-phosphate + H2O2 + NH4(+). It carries out the reaction pyridoxine 5'-phosphate + O2 = pyridoxal 5'-phosphate + H2O2. It participates in cofactor metabolism; pyridoxal 5'-phosphate salvage; pyridoxal 5'-phosphate from pyridoxamine 5'-phosphate: step 1/1. It functions in the pathway cofactor metabolism; pyridoxal 5'-phosphate salvage; pyridoxal 5'-phosphate from pyridoxine 5'-phosphate: step 1/1. Catalyzes the oxidation of either pyridoxine 5'-phosphate (PNP) or pyridoxamine 5'-phosphate (PMP) into pyridoxal 5'-phosphate (PLP). This chain is Pyridoxine/pyridoxamine 5'-phosphate oxidase, found in Zymomonas mobilis subsp. mobilis (strain ATCC 31821 / ZM4 / CP4).